The sequence spans 446 residues: MREIVHLQTGQCGNQIGAAFWQTISGEHGLDSNGVYNGTSELQLERMSVYFNEASGNKYVPRAVLVDLEPGTMDAVRAGPFGQLFRPDNFVFGQSGAGNNWAKGHYTEGAELVDQVLDVVRREAEACDCLQGFQITHSLGGGTGAGMGTLLISKIREEFPDRMMATFSVVPSPKVSDTVVEPYNATLSVHQLVENSDETFCIDNEALYDICMRTLKLSNPSYGDLNHLVSAVMSGVTTCLRFPGQLNSDLRKLAVNMVPFPRLHFFMVGFAPLTSRGAHSFRAVTVPELTQQMFDPKNMMAASDFRNGRYLTCSAIFRGKVSMKEVEDQMRNVQNKNSSYFVEWIPNNVQTALCSIPPRGLKMSSTFVGNSTAIQELFKRIGEQFTAMFRRKAFLHWYTGEGMDEMEFTEAESNMNDLVSEYQQYQDAGVDEEEEEYEEEPLPEDE.

Positions 11, 69, 138, 142, 143, 144, 204, and 226 each coordinate GTP. Glutamate 69 serves as a coordination point for Mg(2+). The interval 423–446 is disordered; it reads QQYQDAGVDEEEEEYEEEPLPEDE. Over residues 429–446 the composition is skewed to acidic residues; the sequence is GVDEEEEEYEEEPLPEDE.

The protein belongs to the tubulin family. In terms of assembly, dimer of alpha and beta chains. A typical microtubule is a hollow water-filled tube with an outer diameter of 25 nm and an inner diameter of 15 nM. Alpha-beta heterodimers associate head-to-tail to form protofilaments running lengthwise along the microtubule wall with the beta-tubulin subunit facing the microtubule plus end conferring a structural polarity. Microtubules usually have 13 protofilaments but different protofilament numbers can be found in some organisms and specialized cells. It depends on Mg(2+) as a cofactor.

The protein localises to the cytoplasm. The protein resides in the cytoskeleton. Its function is as follows. Tubulin is the major constituent of microtubules, a cylinder consisting of laterally associated linear protofilaments composed of alpha- and beta-tubulin heterodimers. Microtubules grow by the addition of GTP-tubulin dimers to the microtubule end, where a stabilizing cap forms. Below the cap, tubulin dimers are in GDP-bound state, owing to GTPase activity of alpha-tubulin. This is Tubulin beta chain (TUBB) from Pestalotiopsis microspora.